The following is a 293-amino-acid chain: Homoserine kinase (293 aa).

84-94 serves as a coordination point for ATP; that stretch reads PLSRGLGSSSA.

The protein belongs to the GHMP kinase family. Homoserine kinase subfamily.

Its subcellular location is the cytoplasm. The enzyme catalyses L-homoserine + ATP = O-phospho-L-homoserine + ADP + H(+). Its pathway is amino-acid biosynthesis; L-threonine biosynthesis; L-threonine from L-aspartate: step 4/5. Catalyzes the ATP-dependent phosphorylation of L-homoserine to L-homoserine phosphate. The chain is Homoserine kinase from Aliarcobacter butzleri (strain RM4018) (Arcobacter butzleri).